The chain runs to 136 residues: Large ribosomal subunit protein uL16c (136 aa).

It belongs to the universal ribosomal protein uL16 family. In terms of assembly, part of the 50S ribosomal subunit.

It is found in the plastid. The protein resides in the chloroplast. In Zea mays (Maize), this protein is Large ribosomal subunit protein uL16c.